The primary structure comprises 351 residues: Protein IQ-DOMAIN 27 (351 aa).

The tract at residues 15 to 37 (KKSKDRSHVSGGDSVKGGDHSGD) is disordered. A calmodulin-binding region spans residues 98 to 114 (EERWAAVKIQKVFRGSL). 2 IQ domains span residues 99–127 (ERWAAVKIQKVFRGSLARKALRALKGIVK) and 128–150 (LQALVRGYLVRKRAAAMLQSIQT). A Nuclear localization signal motif is present at residues 191–198 (DRRTKIVE). Residues 299-310 (SFKAKVRSHSAP) are compositionally biased toward basic residues. Positions 299–351 (SFKAKVRSHSAPRQRSERQRLSLDEVMASKSSVSGVSMSHQHPPRHSCSCDPL) are disordered. The segment covering 312–321 (QRSERQRLSL) has biased composition (basic and acidic residues). Residues 324–337 (VMASKSSVSGVSMS) are compositionally biased toward low complexity.

This sequence belongs to the IQD family. Binds to multiple calmodulin (CaM) in the presence of Ca(2+) and CaM-like proteins.

Its subcellular location is the nucleus. It localises to the nucleus envelope. It is found in the cytoplasm. The protein resides in the cytoskeleton. Its function is as follows. May be involved in cooperative interactions with calmodulins or calmodulin-like proteins. Recruits calmodulin proteins to microtubules, thus being a potential scaffold in cellular signaling and trafficking. May associate with nucleic acids and regulate gene expression at the transcriptional or post-transcriptional level. This is Protein IQ-DOMAIN 27 from Arabidopsis thaliana (Mouse-ear cress).